A 400-amino-acid polypeptide reads, in one-letter code: Cytochrome P450 BJ-1 homolog (400 aa).

Heme is bound at residue C349.

The protein belongs to the cytochrome P450 family. Heme serves as cofactor.

Functionally, cytochromes P450 are a group of heme-thiolate monooxygenases. They oxidize a variety of structurally unrelated compounds, including steroids, fatty acids, and xenobiotics. The polypeptide is Cytochrome P450 BJ-1 homolog (cyp112A2) (Sinorhizobium fredii (strain NBRC 101917 / NGR234)).